The primary structure comprises 468 residues: Nucleoprotein (468 aa).

The interval 1 to 64 (MSGRNRSRSG…KPKAAPPQNV (64 aa)) is disordered. The segment covering 18–33 (FKQESDGSDSESERRN) has biased composition (basic and acidic residues). Residues 48–193 (GSAPKPEKPK…AEGRGSRGNS (146 aa)) are RNA-binding. The CoV N NTD domain maps to 62 to 186 (QNVSWFAPLV…GIPKGFYAEG (125 aa)). Residues arginine 106, arginine 120, and arginine 162 each contribute to the RNA site. Serine 165 is subject to Phosphoserine; by host. 3 disordered regions span residues 181–228 (GFYA…PSTE), 373–399 (KDFPPTEPKKDKKKKEETAQDTVIFED), and 419–468 (QTDD…AERS). The segment covering 190-223 (RGNSRSSSRNSSRASSRGNSRASSRGASPGRPAA) has biased composition (low complexity). One can recognise a CoV N CTD domain in the interval 259 to 376 (TKNEAAANAK…ENLNAYKDFP (118 aa)). Positions 270–373 (LRHKRTAHKG…ILAENLNAYK (104 aa)) are dimerization. The span at 379-390 (EPKKDKKKKEET) shows a compositional bias: basic and acidic residues. The span at 419-436 (QTDDEWLGGDETVYEDED) shows a compositional bias: acidic residues. Residue threonine 451 is modified to Phosphothreonine; by host.

It belongs to the betacoronavirus nucleocapsid protein family. In terms of assembly, homooligomer. Both monomeric and oligomeric forms interact with RNA. Interacts with protein M. Interacts with NSP3; this interaction serves to tether the genome to the newly translated replicase-transcriptase complex at a very early stage of infection. Post-translationally, ADP-ribosylated. The ADP-ribosylation is retained in the virion during infection. In terms of processing, phosphorylated on serine and threonine residues.

It localises to the virion. The protein localises to the host endoplasmic reticulum-Golgi intermediate compartment. The protein resides in the host Golgi apparatus. In terms of biological role, packages the positive strand viral genome RNA into a helical ribonucleocapsid (RNP) and plays a fundamental role during virion assembly through its interactions with the viral genome and membrane protein M. Plays an important role in enhancing the efficiency of subgenomic viral RNA transcription as well as viral replication. The polypeptide is Nucleoprotein (Rousettus leschenaultii (Leschenault's rousette)).